A 286-amino-acid chain; its full sequence is Polyamine aminopropyltransferase (286 aa).

The 234-residue stretch at 5–238 folds into the PABS domain; sequence PLWHETLHDH…GIMTFAWASD (234 aa). Gln-33 contacts S-methyl-5'-thioadenosine. Spermidine is bound by residues His-64 and Asp-88. S-methyl-5'-thioadenosine-binding positions include Glu-108 and 140-141; that span reads DG. The active-site Proton acceptor is Asp-158. Spermidine is bound at residue 158 to 161; it reads DCTD. An S-methyl-5'-thioadenosine-binding site is contributed by Pro-165.

The protein belongs to the spermidine/spermine synthase family. As to quaternary structure, homodimer or homotetramer.

The protein localises to the cytoplasm. It carries out the reaction S-adenosyl 3-(methylsulfanyl)propylamine + putrescine = S-methyl-5'-thioadenosine + spermidine + H(+). Its pathway is amine and polyamine biosynthesis; spermidine biosynthesis; spermidine from putrescine: step 1/1. In terms of biological role, catalyzes the irreversible transfer of a propylamine group from the amino donor S-adenosylmethioninamine (decarboxy-AdoMet) to putrescine (1,4-diaminobutane) to yield spermidine. The protein is Polyamine aminopropyltransferase of Klebsiella pneumoniae subsp. pneumoniae (strain ATCC 700721 / MGH 78578).